The sequence spans 140 residues: Small ribosomal subunit protein uS12 (140 aa).

A 3-methylthioaspartic acid modification is found at D103. A disordered region spans residues 120 to 140 (GVQKRMQARSKYGAKRPKKGK). Residues 125 to 140 (MQARSKYGAKRPKKGK) show a composition bias toward basic residues.

Belongs to the universal ribosomal protein uS12 family. As to quaternary structure, part of the 30S ribosomal subunit. Contacts proteins S8 and S17. May interact with IF1 in the 30S initiation complex.

In terms of biological role, with S4 and S5 plays an important role in translational accuracy. Interacts with and stabilizes bases of the 16S rRNA that are involved in tRNA selection in the A site and with the mRNA backbone. Located at the interface of the 30S and 50S subunits, it traverses the body of the 30S subunit contacting proteins on the other side and probably holding the rRNA structure together. The combined cluster of proteins S8, S12 and S17 appears to hold together the shoulder and platform of the 30S subunit. The polypeptide is Small ribosomal subunit protein uS12 (Desulfitobacterium hafniense (strain Y51)).